A 382-amino-acid chain; its full sequence is cAMP-dependent protein kinase type I-alpha regulatory subunit (382 aa).

Position 2 is an N-acetylalanine (A2). Residues 2-136 form a dimerization and phosphorylation region; sequence ATSSSSSSEE…AALAKAIEKN (135 aa). Residues 62–96 are disordered; the sequence is TKQLLNQQKSGSRSDSREDEISPPPPMNPVVKGRR. Residues 97–101 carry the Pseudophosphorylation motif motif; the sequence is RRGAI. Residues 138 to 255, E203, R212, 256 to 382, E327, and R336 contribute to the 3',5'-cyclic AMP site; these read LFAH…SKVS and ILES…SLSV.

Belongs to the cAMP-dependent kinase regulatory chain family. In terms of assembly, the inactive form of the enzyme is composed of two regulatory chains and two catalytic chains. Activation by cAMP produces two active catalytic monomers and a regulatory dimer that binds four cAMP molecules. The pseudophosphorylation site binds to the substrate-binding region of the catalytic chain but is not phosphorylated. The physiological significance of phosphorylations by other kinases is unclear.

It localises to the cell membrane. This Gallus gallus (Chicken) protein is cAMP-dependent protein kinase type I-alpha regulatory subunit (PRKAR1A).